The sequence spans 300 residues: Movement protein (300 aa).

This sequence belongs to the alfamovirus movement protein family.

The protein localises to the host cell junction. It localises to the host plasmodesma. Its function is as follows. Transports viral genome to neighboring plant cells directly through plasmosdesmata, without any budding. The movement protein allows efficient cell to cell propagation, by bypassing the host cell wall barrier. Acts by forming a tubular structure at the host plasmodesmata, enlarging it enough to allow free passage of virion capsids. This chain is Movement protein, found in Alfalfa mosaic virus (AMV).